The primary structure comprises 225 residues: Ribonuclease HII (225 aa).

One can recognise an RNase H type-2 domain in the interval 2–210; it reads GIVVGVDEAG…VRKLGGPWRS (209 aa). The a divalent metal cation site is built by D8, E9, and D107.

This sequence belongs to the RNase HII family. The cofactor is Mn(2+). Requires Mg(2+) as cofactor.

Its subcellular location is the cytoplasm. The enzyme catalyses Endonucleolytic cleavage to 5'-phosphomonoester.. Endonuclease that specifically degrades the RNA of RNA-DNA hybrids. The chain is Ribonuclease HII (rnhB) from Aeropyrum pernix (strain ATCC 700893 / DSM 11879 / JCM 9820 / NBRC 100138 / K1).